Consider the following 381-residue polypeptide: Chaperone protein DnaJ (381 aa).

The region spanning 5–70 (DYYEVLGLQK…QKRAAYDQYG (66 aa)) is the J domain. The CR-type zinc-finger motif lies at 133 to 211 (GTTKDIQINT…CHGEGRVHKK (79 aa)). Zn(2+)-binding residues include C146, C149, C163, C166, C185, C188, C199, and C202. CXXCXGXG motif repeat units follow at residues 146 to 153 (CDSCGGSG), 163 to 170 (CPHCHGSG), 185 to 192 (CPTCHGSG), and 199 to 206 (CRSCHGEG).

This sequence belongs to the DnaJ family. Homodimer. Requires Zn(2+) as cofactor.

It localises to the cytoplasm. Its function is as follows. Participates actively in the response to hyperosmotic and heat shock by preventing the aggregation of stress-denatured proteins and by disaggregating proteins, also in an autonomous, DnaK-independent fashion. Unfolded proteins bind initially to DnaJ; upon interaction with the DnaJ-bound protein, DnaK hydrolyzes its bound ATP, resulting in the formation of a stable complex. GrpE releases ADP from DnaK; ATP binding to DnaK triggers the release of the substrate protein, thus completing the reaction cycle. Several rounds of ATP-dependent interactions between DnaJ, DnaK and GrpE are required for fully efficient folding. Also involved, together with DnaK and GrpE, in the DNA replication of plasmids through activation of initiation proteins. This is Chaperone protein DnaJ from Haemophilus influenzae (strain 86-028NP).